The primary structure comprises 311 residues: tRNA-cytidine(32) 2-sulfurtransferase (311 aa).

The short motif at 47-52 (SGGKDS) is the PP-loop motif element. [4Fe-4S] cluster contacts are provided by cysteine 122, cysteine 125, and cysteine 213.

Belongs to the TtcA family. In terms of assembly, homodimer. It depends on Mg(2+) as a cofactor. Requires [4Fe-4S] cluster as cofactor.

Its subcellular location is the cytoplasm. The enzyme catalyses cytidine(32) in tRNA + S-sulfanyl-L-cysteinyl-[cysteine desulfurase] + AH2 + ATP = 2-thiocytidine(32) in tRNA + L-cysteinyl-[cysteine desulfurase] + A + AMP + diphosphate + H(+). Its pathway is tRNA modification. Functionally, catalyzes the ATP-dependent 2-thiolation of cytidine in position 32 of tRNA, to form 2-thiocytidine (s(2)C32). The sulfur atoms are provided by the cysteine/cysteine desulfurase (IscS) system. The sequence is that of tRNA-cytidine(32) 2-sulfurtransferase from Escherichia coli O157:H7.